Here is a 315-residue protein sequence, read N- to C-terminus: Homoserine kinase (315 aa).

Position 97–107 (97–107 (PPARGLGSSAT)) interacts with ATP.

The protein belongs to the GHMP kinase family. Homoserine kinase subfamily.

The protein resides in the cytoplasm. The catalysed reaction is L-homoserine + ATP = O-phospho-L-homoserine + ADP + H(+). It participates in amino-acid biosynthesis; L-threonine biosynthesis; L-threonine from L-aspartate: step 4/5. Functionally, catalyzes the ATP-dependent phosphorylation of L-homoserine to L-homoserine phosphate. This is Homoserine kinase from Prochlorococcus marinus (strain MIT 9215).